Reading from the N-terminus, the 509-residue chain is 2,3-bisphosphoglycerate-independent phosphoglycerate mutase (509 aa).

Mn(2+) is bound by residues D12 and S62. S62 functions as the Phosphoserine intermediate in the catalytic mechanism. Substrate is bound by residues H123, 153–154 (RD), R185, R191, 260–263 (RPDR), and K333. Mn(2+) contacts are provided by D400, H404, D441, H442, and H460.

Belongs to the BPG-independent phosphoglycerate mutase family. Monomer. The cofactor is Mn(2+).

The catalysed reaction is (2R)-2-phosphoglycerate = (2R)-3-phosphoglycerate. It functions in the pathway carbohydrate degradation; glycolysis; pyruvate from D-glyceraldehyde 3-phosphate: step 3/5. Catalyzes the interconversion of 2-phosphoglycerate and 3-phosphoglycerate. In Clostridium botulinum (strain ATCC 19397 / Type A), this protein is 2,3-bisphosphoglycerate-independent phosphoglycerate mutase.